Reading from the N-terminus, the 117-residue chain is uncharacterized protein (117 aa).

It is found in the cytoplasm. The protein resides in the nucleus. This is an uncharacterized protein from Schizosaccharomyces pombe (strain 972 / ATCC 24843) (Fission yeast).